We begin with the raw amino-acid sequence, 533 residues long: MPLNAVIFTLLLRCSICLGKFPFYTIPDKLGPWSPIDIHHLSCPNNLVVEDEGCTTLTPFSYMELKVGYITSIKVSGFTCTGVVTEAETYTNFVGYVTTTFRRRHFRPSVNSCRDAYNWKIAGDPRYEESLHNPYPDSHWLRTVKTTKESLLIISPSVADMDAYDKKLYSKIVSNGRCSEISPGSPFCPTNHEYTIWMPESSNPGISCDIFTRSMGKKATKDGQLCGFVDERGLYKSLKGACRLRLCGISGLRLMDGSWVSLPQVNNSEWCSPDQLVNIHDFHSDEIEHLVADELVKKREDCLDALETILFTKSISFRRLSHLRKLVPGFGKAYTIINRTLMEAEAHYKSVREWKEIIPSKGCLKAGGRCYPHHNGIFFNGIILGPGGEILIPEMQSALLQQHIELLESSVVPLKHPLADPSTVFKNDDEAESFVDVHLPDTNQKISGIDLGLPEWKRYFLIGVSAVALLALSIIIAVCCKRFRKRKKSKPGPVELTRKVSVISKGNGPVPSWESYKEGTTGDVRNTTPSTRE.

Positions 1 to 19 (MPLNAVIFTLLLRCSICLG) are cleaved as a signal peptide. At 20-459 (KFPFYTIPDK…DLGLPEWKRY (440 aa)) the chain is on the virion surface side. Residues 460–480 (FLIGVSAVALLALSIIIAVCC) traverse the membrane as a helical segment. C480 is lipidated: S-palmitoyl cysteine; by host. Over 481-533 (KRFRKRKKSKPGPVELTRKVSVISKGNGPVPSWESYKEGTTGDVRNTTPSTRE) the chain is Intravirion. Residues 492–533 (GPVELTRKVSVISKGNGPVPSWESYKEGTTGDVRNTTPSTRE) form a disordered region. The segment covering 523–533 (DVRNTTPSTRE) has biased composition (polar residues).

The protein belongs to the lyssavirus glycoprotein family. In terms of assembly, homotrimer. Interacts with matrix protein. Glycosylated and palmitoylated by host. Glycosylation is crucial for glycoprotein export at the cell surface.

The protein resides in the virion membrane. Functionally, attaches the virus to host cellular receptor, inducing endocytosis of the virion. In the endosome, the acidic pH induces conformational changes in the glycoprotein trimer, which trigger fusion between virus and cell membrane. This Duvenhage virus (DUVV) protein is Glycoprotein (G).